A 1167-amino-acid chain; its full sequence is RNA-directed RNA polymerase (1167 aa).

The RdRp catalytic domain maps to 553 to 735 (LTYGILAEAT…KALASYTGLE (183 aa)).

This sequence belongs to the reoviridae RNA-directed RNA polymerase family. In terms of assembly, interacts with VP3 (Potential). Interacts with VP2 (Potential). Interacts with NSP5; this interaction is probably necessary for the formation of functional virus factories.

It localises to the virion. It catalyses the reaction RNA(n) + a ribonucleoside 5'-triphosphate = RNA(n+1) + diphosphate. Its function is as follows. RNA-directed RNA polymerase that is involved in both transcription and genome replication. Together with VP3 capping enzyme, forms an enzyme complex positioned near the channels situated at each of the five-fold vertices of the core. Following infection, the outermost layer of the virus is lost, leaving a double-layered particle (DLP) made up of the core and VP6 shell. VP1 then catalyzes the transcription of fully conservative plus-strand genomic RNAs that are extruded through the DLP's channels into the cytoplasm where they function as mRNAs for translation of viral proteins. One copy of each of the viral (+)RNAs is also recruited during core assembly, together with newly synthesized polymerase complexes and VP2. The polymerase of these novo-formed particles catalyzes the synthesis of complementary minus-strands leading to dsDNA formation. To do so, the polymerase specifically recognizes conserved 3' sequence(s) in plus-strand RNA templates. Once dsRNA synthesis is complete, the polymerase switches to the transcriptional mode, thus providing secondary transcription. This chain is RNA-directed RNA polymerase, found in Rotavirus X (strain RVX/Human/China/NADRV-J19/1997/GXP[X]) (RV ADRV-N).